The sequence spans 355 residues: 3-isopropylmalate dehydrogenase (355 aa).

Substrate contacts are provided by arginine 90, arginine 100, arginine 128, and aspartate 222. Mg(2+)-binding residues include aspartate 222, aspartate 246, and aspartate 250. 280 to 292 (GSAPDIAGKGVAN) serves as a coordination point for NAD(+).

Belongs to the isocitrate and isopropylmalate dehydrogenases family. LeuB type 1 subfamily. Homodimer. Mg(2+) serves as cofactor. Mn(2+) is required as a cofactor.

The protein resides in the cytoplasm. It carries out the reaction (2R,3S)-3-isopropylmalate + NAD(+) = 4-methyl-2-oxopentanoate + CO2 + NADH. Its pathway is amino-acid biosynthesis; L-leucine biosynthesis; L-leucine from 3-methyl-2-oxobutanoate: step 3/4. Its function is as follows. Catalyzes the oxidation of 3-carboxy-2-hydroxy-4-methylpentanoate (3-isopropylmalate) to 3-carboxy-4-methyl-2-oxopentanoate. The product decarboxylates to 4-methyl-2 oxopentanoate. The chain is 3-isopropylmalate dehydrogenase from Cupriavidus pinatubonensis (strain JMP 134 / LMG 1197) (Cupriavidus necator (strain JMP 134)).